We begin with the raw amino-acid sequence, 172 residues long: Neuropeptide-like protein nlp-8 (172 aa).

Positions 1 to 26 are cleaved as a signal peptide; that stretch reads MSQKLLPISPLQLLFLQCLLIGFTAA.

Post-translationally, may be processed by convertase egl-3.

Its subcellular location is the secreted. Functionally, neuropeptide-like protein. Plays a role in behaviors associated with a sleep-like state induced by stress (SIS), acting in concert with the FARP (FMRFamide related) peptides, flp-13 and flp-24. The chain is Neuropeptide-like protein nlp-8 from Caenorhabditis elegans.